We begin with the raw amino-acid sequence, 716 residues long: MIYQSPTIQVELLEDNIAKLCFNAPGSVNKFDRETLTSLDAALDSIKQDSNIKALVLTSSKDTFIVGADITEFLGLFAQDDAVLLSWVEQANAVFNKLEDLPFPTASAIKGFALGGGCETILATDFRIADTTAKIGLPETKLGIIPGFGGTVRLPRVIGADNALEWITTGKDQRAEDALKVGAVDAVVAPQALEAAAIQMLKDAVAEKLDWQARRNRKLSALTLPKLEAMMSFTTAKGMVFAVAGKHYPAPMAAVSVIEQASTKGRAEALQIEHQAFIKLAKTDVAKALIGIFLNDQFVKGKAKKAGKLAKEVNNAAVLGAGIMGGGIAYQSASKGTPIVMKDIAQPALDLGLNEAAKLLSAQVARGRSTPEKMAKVLNNITPSLDYAAIKHSDVVVEAVVEHPKIKAQVLAEVEGYVSEDAIIASNTSTISINLLAKSMKKPERFCGMHFFNPVHKMPLVEIIRGEHSSEETIASVVAYASKMGKTPIVVNDCPGFFVNRVLFPYFAGFNGLLAEGGDFAAIDKVMEKQFGWPMGPAYLLDVVGLDTGHHAQAVMAEGFPDRMGKSGTDAIDVMFENKRLGQKNGKGFYVYSVDSRGKPKKDVDPTSYGLLKDAFGELKAFEADDIIARTMIPMIIETVRCLEEGIVASPAEADMGLVYGLGFPPFRGGVFRYLDTMGVANFVALADKYAHLGGLYQVTDAMRTLAANNGSYYQA.

The segment at 1 to 189 (MIYQSPTIQV…KVGAVDAVVA (189 aa)) is enoyl-CoA hydratase/isomerase. Substrate is bound at residue aspartate 296. The 3-hydroxyacyl-CoA dehydrogenase stretch occupies residues 311–716 (KEVNNAAVLG…AANNGSYYQA (406 aa)). NAD(+) is bound by residues methionine 324, aspartate 343, 400-402 (VVE), lysine 407, and serine 429. The active-site For 3-hydroxyacyl-CoA dehydrogenase activity is the histidine 450. Residue asparagine 453 participates in NAD(+) binding. Residues asparagine 500 and tyrosine 660 each contribute to the substrate site.

It in the N-terminal section; belongs to the enoyl-CoA hydratase/isomerase family. In the C-terminal section; belongs to the 3-hydroxyacyl-CoA dehydrogenase family. As to quaternary structure, heterotetramer of two alpha chains (FadB) and two beta chains (FadA).

The enzyme catalyses a (3S)-3-hydroxyacyl-CoA + NAD(+) = a 3-oxoacyl-CoA + NADH + H(+). The catalysed reaction is a (3S)-3-hydroxyacyl-CoA = a (2E)-enoyl-CoA + H2O. It carries out the reaction a 4-saturated-(3S)-3-hydroxyacyl-CoA = a (3E)-enoyl-CoA + H2O. It catalyses the reaction (3S)-3-hydroxybutanoyl-CoA = (3R)-3-hydroxybutanoyl-CoA. The enzyme catalyses a (3Z)-enoyl-CoA = a 4-saturated (2E)-enoyl-CoA. The catalysed reaction is a (3E)-enoyl-CoA = a 4-saturated (2E)-enoyl-CoA. It participates in lipid metabolism; fatty acid beta-oxidation. Involved in the aerobic and anaerobic degradation of long-chain fatty acids via beta-oxidation cycle. Catalyzes the formation of 3-oxoacyl-CoA from enoyl-CoA via L-3-hydroxyacyl-CoA. It can also use D-3-hydroxyacyl-CoA and cis-3-enoyl-CoA as substrate. The chain is Fatty acid oxidation complex subunit alpha from Shewanella baltica (strain OS155 / ATCC BAA-1091).